Reading from the N-terminus, the 873-residue chain is V-type proton ATPase 116 kDa subunit a 2 (873 aa).

Residues 1-407 (MGSLSRSEEM…TIITFPFLFS (407 aa)) are Cytoplasmic-facing. A helical membrane pass occupies residues 408-428 (CMFGDLGHGCIMLMAGLWFVL). The Lumenal segment spans residues 429–445 (REKNLQARNIKDEIFNM). A helical membrane pass occupies residues 446 to 466 (FFGGRYIILLMGLFSIHAGII). Topologically, residues 467 to 543 (YNDMFAKSFN…NKLNFLNSMK (77 aa)) are cytoplasmic. The helical transmembrane segment at 544 to 564 (MKLSVILGISQMTFGVILSFF) threads the bilayer. N-linked (GlcNAc...) asparagine glycosylation is found at Asn-565 and Asn-569. Residues 565–574 (NHTYNKSKID) are Lumenal-facing. A helical membrane pass occupies residues 575–595 (IFTVFIPQMLFMGCIFMYLCL). The Cytoplasmic segment spans residues 596–614 (QIILKWLFFWTKEATVFGQ). A helical membrane pass occupies residues 615 to 635 (IYPGSHCAPSLLIGLINMFMM). The Lumenal segment spans residues 636–668 (KDRNAGFVVDGGKVNGEYREVETCYLSQWYPGQ). The chain crosses the membrane as a helical span at residues 669-689 (SVIEMILVVIAVICVPVMLFG). Residues 690 to 785 (KPIHHVMQQK…LWALSLAHAQ (96 aa)) are Cytoplasmic-facing. A helical membrane pass occupies residues 786 to 806 (LSEVLWHMVFVTGGLGISGTA). Gly-807 is a topological domain (lumenal). A helical membrane pass occupies residues 808-828 (FIAVYVVFFIFFVLTISILVL). Topologically, residues 829 to 873 (MEGLSAFLHTLRLHWVEFQSKFYLGLGYPFVPYSFKTALQEAEAA) are cytoplasmic.

Belongs to the V-ATPase 116 kDa subunit family. As to quaternary structure, V-ATPase is a heteromultimeric enzyme made up of two complexes: the ATP-hydrolytic V1 complex and the proton translocation V0 complex. The V1 complex consists of three catalytic AB heterodimers that form a heterohexamer, three peripheral stalks each consisting of EG heterodimers, one central rotor including subunits D and F, and the regulatory subunits C and H. The proton translocation complex V0 consists of the proton transport subunit a, a ring of proteolipid subunits c9c'', rotary subunit d, subunits e and f, and the accessory subunits vah-19/Ac45 and vah-20/PRR. Interacts with V-type proton ATPase subunit C vha-11. As to expression, expressed in the H-shaped excretory cell (at protein level). Expressed in hypodermal cells around the vulva. Expressed in the main epidermal syncytium. Expressed in the sheath cells associated with head and tail sensory organs; specifically, expressed in the apical sheath cells of the amphids and CEP neuron and in the sheath cells of the OLQ sensory organ.

It localises to the apical cell membrane. It is found in the endosome. The protein localises to the multivesicular body membrane. Subunit of the V0 complex of vacuolar(H+)-ATPase (V-ATPase), a multisubunit enzyme composed of a peripheral complex (V1) that hydrolyzes ATP and a membrane integral complex (V0) that translocates protons. V-ATPase is responsible for acidifying and maintaining the pH of intracellular compartments and in some cell types, is targeted to the plasma membrane, where it is responsible for acidifying the extracellular environment. Involved in the assembly of the V-ATPase complex. The V-ATPase is required for the function of the excretory canal. Independently of the V1 complex, the V0 complex of the V-ATPase is required for multivesicular body membrane fusion with the apical membrane of the epidermal cells during exosome release and thus regulates the release of cuticle components such as Hedgehog-related peptide wrt-2 but not collagen. Also, in the epidermis, regulates the trafficking of che-14 and rdy-2. Regulates the secretion of granular material found in the amphid channel and in controlling osmoregulation in the amphid pocket. The chain is V-type proton ATPase 116 kDa subunit a 2 from Caenorhabditis elegans.